A 619-amino-acid chain; its full sequence is Dihydroxy-acid dehydratase 1 (619 aa).

A Mg(2+)-binding site is contributed by Asp-81. Cys-122 is a [2Fe-2S] cluster binding site. Residues Asp-123 and Lys-124 each coordinate Mg(2+). The residue at position 124 (Lys-124) is an N6-carboxylysine. Cys-198 serves as a coordination point for [2Fe-2S] cluster. Glu-494 contacts Mg(2+). Residue Ser-520 is the Proton acceptor of the active site.

Belongs to the IlvD/Edd family. Homodimer. It depends on [2Fe-2S] cluster as a cofactor. Requires Mg(2+) as cofactor.

It carries out the reaction (2R)-2,3-dihydroxy-3-methylbutanoate = 3-methyl-2-oxobutanoate + H2O. The enzyme catalyses (2R,3R)-2,3-dihydroxy-3-methylpentanoate = (S)-3-methyl-2-oxopentanoate + H2O. Its pathway is amino-acid biosynthesis; L-isoleucine biosynthesis; L-isoleucine from 2-oxobutanoate: step 3/4. The protein operates within amino-acid biosynthesis; L-valine biosynthesis; L-valine from pyruvate: step 3/4. Its function is as follows. Functions in the biosynthesis of branched-chain amino acids. Catalyzes the dehydration of (2R,3R)-2,3-dihydroxy-3-methylpentanoate (2,3-dihydroxy-3-methylvalerate) into 2-oxo-3-methylpentanoate (2-oxo-3-methylvalerate) and of (2R)-2,3-dihydroxy-3-methylbutanoate (2,3-dihydroxyisovalerate) into 2-oxo-3-methylbutanoate (2-oxoisovalerate), the penultimate precursor to L-isoleucine and L-valine, respectively. In Bordetella bronchiseptica (strain ATCC BAA-588 / NCTC 13252 / RB50) (Alcaligenes bronchisepticus), this protein is Dihydroxy-acid dehydratase 1.